We begin with the raw amino-acid sequence, 730 residues long: MSDRFELYLTCPKGLESLLAEEAKGLGLDEVREHTSAIRGAADMETAYRLCVWSRLANRVLLVLKRFSMKNADDLYDGVHAVDWADHLAADGTLAVEFSGHGSGIDNTHFGALKVKDAIVDKLRNREGLRPSVEKIDPDVRVHLRLDRGEAILSLDLSGHSLHQRGYRLQQGAAPLKENLAAAVLIRAGWPRIAAEGGALADPMCGVGTFLVEAAMIAADIAPNLKRERWGFSAWLGHVPALWRKVHDEAQARAQAGLAKPPLWIRGYEADPRLIQPGRNNVERAGLGDWVKIYQGEVSTFEPRPDQNQKGLVISNPPYGERLGDEASLLYLYQNLGERLRQACMGWEAAVFTGAPQLGKRMGIRSHKQYAFWNGALPCKLLLFKVQPDQFVTGERREAQPEGTEARQQVPQASEPARLSEGAQMFANRLQKNLKQLGKWARREQIDCYRLYDADMPEYALAVDLYQDWVHVQEYAAPRSVDPDKAQARLLDALAAIPQALGISPQRVVLKRRERQSGTRQYERQATEGRFQEVNEGGVKLLVNLTDYLDTGLFLDHRPMRMRIQREAAGKRFLNLFCYTATATVHAAKGGARSTTSVDLSKTYLDWARRNLALNGYSERNRLEQSDVMAWLEGNRDSYDLIFIDPPTFSNSKRMEGVFDVQRDHVQLLDLAMARLAPGGVLYFSNNFRKFQLDEHLMARYVVEEISAQTLDPDFARNNRIHRAWRLQLR.

The THUMP domain maps to 46-157; the sequence is TAYRLCVWSR…RGEAILSLDL (112 aa). The disordered stretch occupies residues 394–418; sequence GERREAQPEGTEARQQVPQASEPAR.

It belongs to the methyltransferase superfamily. RlmKL family.

It is found in the cytoplasm. The enzyme catalyses guanosine(2445) in 23S rRNA + S-adenosyl-L-methionine = N(2)-methylguanosine(2445) in 23S rRNA + S-adenosyl-L-homocysteine + H(+). It carries out the reaction guanosine(2069) in 23S rRNA + S-adenosyl-L-methionine = N(2)-methylguanosine(2069) in 23S rRNA + S-adenosyl-L-homocysteine + H(+). In terms of biological role, specifically methylates the guanine in position 2445 (m2G2445) and the guanine in position 2069 (m7G2069) of 23S rRNA. The chain is Ribosomal RNA large subunit methyltransferase K/L from Pseudomonas putida (strain ATCC 700007 / DSM 6899 / JCM 31910 / BCRC 17059 / LMG 24140 / F1).